A 209-amino-acid polypeptide reads, in one-letter code: Ribonuclease HII (209 aa).

The region spanning 20–209 is the RNase H type-2 domain; it reads QLEIGIDEVG…KSFLTKLNLI (190 aa). A divalent metal cation contacts are provided by Asp26, Glu27, and Asp122.

The protein belongs to the RNase HII family. Mn(2+) is required as a cofactor. The cofactor is Mg(2+).

It is found in the cytoplasm. It catalyses the reaction Endonucleolytic cleavage to 5'-phosphomonoester.. Its function is as follows. Endonuclease that specifically degrades the RNA of RNA-DNA hybrids. This chain is Ribonuclease HII, found in Prochlorococcus marinus (strain MIT 9515).